We begin with the raw amino-acid sequence, 554 residues long: Glucose-6-phosphate isomerase (554 aa).

The Proton donor role is filled by E359. Residues H390 and K518 contribute to the active site.

This sequence belongs to the GPI family.

The protein resides in the cytoplasm. It catalyses the reaction alpha-D-glucose 6-phosphate = beta-D-fructose 6-phosphate. The protein operates within carbohydrate biosynthesis; gluconeogenesis. It functions in the pathway carbohydrate degradation; glycolysis; D-glyceraldehyde 3-phosphate and glycerone phosphate from D-glucose: step 2/4. Its function is as follows. Catalyzes the reversible isomerization of glucose-6-phosphate to fructose-6-phosphate. This is Glucose-6-phosphate isomerase from Pseudomonas syringae pv. syringae (strain B728a).